Here is a 210-residue protein sequence, read N- to C-terminus: Probable septum site-determining protein MinC (210 aa).

The protein belongs to the MinC family. In terms of assembly, interacts with MinD and FtsZ.

In terms of biological role, cell division inhibitor that blocks the formation of polar Z ring septums. Rapidly oscillates between the poles of the cell to destabilize FtsZ filaments that have formed before they mature into polar Z rings. Prevents FtsZ polymerization. This chain is Probable septum site-determining protein MinC, found in Thermotoga sp. (strain RQ2).